The chain runs to 445 residues: Phosphoglucosamine mutase (445 aa).

Catalysis depends on Ser-102, which acts as the Phosphoserine intermediate. The Mg(2+) site is built by Ser-102, Asp-241, Asp-243, and Asp-245. Ser-102 carries the post-translational modification Phosphoserine.

The protein belongs to the phosphohexose mutase family. Requires Mg(2+) as cofactor. In terms of processing, activated by phosphorylation.

The enzyme catalyses alpha-D-glucosamine 1-phosphate = D-glucosamine 6-phosphate. Catalyzes the conversion of glucosamine-6-phosphate to glucosamine-1-phosphate. This is Phosphoglucosamine mutase from Escherichia fergusonii (strain ATCC 35469 / DSM 13698 / CCUG 18766 / IAM 14443 / JCM 21226 / LMG 7866 / NBRC 102419 / NCTC 12128 / CDC 0568-73).